A 113-amino-acid polypeptide reads, in one-letter code: uncharacterized protein (113 aa).

The 48-residue stretch at 41-88 (DWHHHPDSDELFIVLEGELLIDFKDKETAVLKANDSLLIPKGTVHRTR) folds into the Cupin type-2 domain.

Belongs to the SchB/CurC family.

This is an uncharacterized protein from Bacillus subtilis (strain 168).